Consider the following 206-residue polypeptide: Ribosomal RNA small subunit methyltransferase G (206 aa).

S-adenosyl-L-methionine contacts are provided by residues Gly-71, Phe-76, 122-123 (AE), and Arg-135.

The protein belongs to the methyltransferase superfamily. RNA methyltransferase RsmG family.

The protein resides in the cytoplasm. Functionally, specifically methylates the N7 position of a guanine in 16S rRNA. This chain is Ribosomal RNA small subunit methyltransferase G, found in Bacteroides thetaiotaomicron (strain ATCC 29148 / DSM 2079 / JCM 5827 / CCUG 10774 / NCTC 10582 / VPI-5482 / E50).